Here is a 194-residue protein sequence, read N- to C-terminus: E3 ubiquitin-protein ligase RNF4 (194 aa).

Over residues 1–12 the composition is skewed to basic residues; that stretch reads MSTRNPQRKRRG. Residues 1-20 form a required for ubiquitination activity region; sequence MSTRNPQRKRRGGTVNSRQT. The segment at 1–39 is disordered; that stretch reads MSTRNPQRKRRGGTVNSRQTQKRTRETTSTPEVSLETEP. The tract at residues 6-65 is mediates interaction with TRPS1; that stretch reads PQRKRRGGTVNSRQTQKRTRETTSTPEVSLETEPIELVETVGDEIVDLTCESLEPVVVDL. Residues 40 to 43 carry the SUMO interaction motif 1; mediates the binding to polysumoylated substrates motif; it reads IELV. Residues 50-53 carry the SUMO interaction motif 2; mediates the binding to polysumoylated substrates motif; that stretch reads IVDL. The SUMO interaction motif 3; mediates the binding to polysumoylated substrates motif lies at 61–63; that stretch reads VVV. An SUMO interaction motif 4; mediates the binding to polysumoylated substrates motif is present at residues 71–74; the sequence is VVIV. A phosphoserine mark is found at Ser-98 and Ser-99. The disordered stretch occupies residues 110–130; sequence VYVTTHTPRSTKDDGATGPRP. 8 residues coordinate Zn(2+): Cys-136, Cys-139, Cys-158, His-160, Cys-163, Cys-166, Cys-177, and Cys-180. The RING-type zinc finger occupies 136–181; it reads CPICMDGYSEIVQNGRLIVSTECGHVFCSQCLRDSLKNANTCPTCR.

Homodimer (via RING-type zinc finger domain). Interacts with GSC2. Interacts with AR/the androgen receptor and TBP. Interacts with TCF20. Interacts with PATZ1. Interacts with TRPS1; negatively regulates TRPS1 transcriptional repressor activity. Interacts with PML (isoform PML-1, isoform PML-2, isoform PML-3, isoform PML-4, isoform PML-5 and isoform PML-6). Interacts with PRDM1/Blimp-1. Post-translationally, sumoylated; conjugated by one or two SUMO1 moieties. Autoubiquitinated. In terms of tissue distribution, in the embryo, expressed primarily in the developing nervous system with strong expression in the dorsal root ganglia and gonads. Ubiquitously expressed in the adult.

The protein resides in the cytoplasm. It localises to the nucleus. The protein localises to the PML body. It catalyses the reaction S-ubiquitinyl-[E2 ubiquitin-conjugating enzyme]-L-cysteine + [acceptor protein]-L-lysine = [E2 ubiquitin-conjugating enzyme]-L-cysteine + N(6)-ubiquitinyl-[acceptor protein]-L-lysine.. Its pathway is protein modification; protein ubiquitination. In terms of biological role, E3 ubiquitin-protein ligase which binds polysumoylated chains covalently attached to proteins and mediates 'Lys-6'-, 'Lys-11'-, 'Lys-48'- and 'Lys-63'-linked polyubiquitination of those substrates and their subsequent targeting to the proteasome for degradation. Regulates the degradation of several proteins including PML and the transcriptional activator PEA3. Involved in chromosome alignment and spindle assembly, it regulates the kinetochore CENPH-CENPI-CENPK complex by targeting polysumoylated CENPI to proteasomal degradation. Regulates the cellular responses to hypoxia and heat shock through degradation of respectively EPAS1 and PARP1. Alternatively, it may also bind DNA/nucleosomes and have a more direct role in the regulation of transcription for instance enhancing basal transcription and steroid receptor-mediated transcriptional activation. Catalyzes ubiquitination of sumoylated PARP1 in response to PARP1 trapping to chromatin, leading to PARP1 removal from chromatin by VCP/p97. In Mus musculus (Mouse), this protein is E3 ubiquitin-protein ligase RNF4.